A 433-amino-acid polypeptide reads, in one-letter code: Serine hydroxymethyltransferase (433 aa).

Residues L132 and 136-138 (GHL) contribute to the (6S)-5,6,7,8-tetrahydrofolate site. The residue at position 241 (K241) is an N6-(pyridoxal phosphate)lysine.

The protein belongs to the SHMT family. As to quaternary structure, homodimer. It depends on pyridoxal 5'-phosphate as a cofactor.

It is found in the cytoplasm. It catalyses the reaction (6R)-5,10-methylene-5,6,7,8-tetrahydrofolate + glycine + H2O = (6S)-5,6,7,8-tetrahydrofolate + L-serine. The protein operates within one-carbon metabolism; tetrahydrofolate interconversion. Its pathway is amino-acid biosynthesis; glycine biosynthesis; glycine from L-serine: step 1/1. In terms of biological role, catalyzes the reversible interconversion of serine and glycine with tetrahydrofolate (THF) serving as the one-carbon carrier. This reaction serves as the major source of one-carbon groups required for the biosynthesis of purines, thymidylate, methionine, and other important biomolecules. Also exhibits THF-independent aldolase activity toward beta-hydroxyamino acids, producing glycine and aldehydes, via a retro-aldol mechanism. This chain is Serine hydroxymethyltransferase, found in Bradyrhizobium sp. (strain ORS 278).